The following is a 90-amino-acid chain: uncharacterized protein (90 aa).

The chain crosses the membrane as a helical span at residues 69–89 (LLYIFLGAMIVIIFLVIKNQL).

The protein belongs to the IIV-6 466R family.

It localises to the membrane. This is an uncharacterized protein from Invertebrate iridescent virus 6 (IIV-6).